The primary structure comprises 605 residues: Isocitrate dehydrogenase kinase/phosphatase (605 aa).

Residues 353–359 (APGFKGT) and Lys-374 contribute to the ATP site. The active site involves Asp-413.

The protein belongs to the AceK family.

The protein resides in the cytoplasm. It catalyses the reaction L-seryl-[isocitrate dehydrogenase] + ATP = O-phospho-L-seryl-[isocitrate dehydrogenase] + ADP + H(+). Its function is as follows. Bifunctional enzyme which can phosphorylate or dephosphorylate isocitrate dehydrogenase (IDH) on a specific serine residue. This is a regulatory mechanism which enables bacteria to bypass the Krebs cycle via the glyoxylate shunt in response to the source of carbon. When bacteria are grown on glucose, IDH is fully active and unphosphorylated, but when grown on acetate or ethanol, the activity of IDH declines drastically concomitant with its phosphorylation. The protein is Isocitrate dehydrogenase kinase/phosphatase of Rhodopseudomonas palustris (strain HaA2).